The primary structure comprises 275 residues: 4-diphosphocytidyl-2-C-methyl-D-erythritol kinase (275 aa).

Lys-14 is an active-site residue. ATP is bound at residue 98–108 (PMGAGLGGGSS). Asp-140 is an active-site residue.

Belongs to the GHMP kinase family. IspE subfamily.

It catalyses the reaction 4-CDP-2-C-methyl-D-erythritol + ATP = 4-CDP-2-C-methyl-D-erythritol 2-phosphate + ADP + H(+). The protein operates within isoprenoid biosynthesis; isopentenyl diphosphate biosynthesis via DXP pathway; isopentenyl diphosphate from 1-deoxy-D-xylulose 5-phosphate: step 3/6. In terms of biological role, catalyzes the phosphorylation of the position 2 hydroxy group of 4-diphosphocytidyl-2C-methyl-D-erythritol. This chain is 4-diphosphocytidyl-2-C-methyl-D-erythritol kinase, found in Francisella tularensis subsp. novicida (strain U112).